The sequence spans 206 residues: dTTP/UTP pyrophosphatase (206 aa).

Residue Asp-79 is the Proton acceptor of the active site.

This sequence belongs to the Maf family. YhdE subfamily. It depends on a divalent metal cation as a cofactor.

The protein localises to the cytoplasm. The enzyme catalyses dTTP + H2O = dTMP + diphosphate + H(+). It carries out the reaction UTP + H2O = UMP + diphosphate + H(+). Nucleoside triphosphate pyrophosphatase that hydrolyzes dTTP and UTP. May have a dual role in cell division arrest and in preventing the incorporation of modified nucleotides into cellular nucleic acids. The sequence is that of dTTP/UTP pyrophosphatase from Rhizobium meliloti (strain 1021) (Ensifer meliloti).